A 1044-amino-acid chain; its full sequence is Protein ITPRID1 (1044 aa).

Over residues 1–14 the composition is skewed to polar residues; the sequence is MMAQKSQGSDNLQE. Disordered stretches follow at residues 1–20, 230–251, 388–489, and 583–607; these read MMAQ…EKSK, EEKA…EHRR, MEEV…SSQE, and PEGA…HTQD. The span at 388-398 shows a compositional bias: acidic residues; that stretch reads MEEVQSFEEET. 2 stretches are compositionally biased toward polar residues: residues 460-469 and 480-489; these read HSLVSSQDCQ and RASMSFSSQE. The stretch at 896–937 forms a coiled coil; sequence SRDMSEEEREEAEQLQTLREALRQQVAELEFQLGDRAQQIRE.

The polypeptide is Protein ITPRID1 (Homo sapiens (Human)).